Here is a 292-residue protein sequence, read N- to C-terminus: GID complex substrate-recognition subunit 10 (292 aa).

It belongs to the GID4/VID24 family. Substrate-recognition component of the GID/CTLH ubiquitin ligase complex. In the absence of stress, the complex exists as an inactive anticipatory complex (GID(Ant)), composed of VID30/GID1, the E3 ubiquitin-ligase RMD5/GID2, VID28/GID5, GID8, and the RING-like subunit FYV10/GID9, awaiting a substrate receptor to form the active E3 ligase complex. When cells are shifted to glucose-containing medium, the substrate receptor VID24/GID4 is induced and becomes part of the complex, named GID(SR4). Under osmotic or heat stress, the substrate receptor GID10 is induced and becomes part of the complex, named GID(SR10). Interacts with proteins that have an N-terminal Pro/N-degron, including ART2.

In terms of biological role, substrate-recognition component of the GID E3 ligase complex recruiting N termini and catalyzing ubiquitination of proteins targeted for degradation. GID E3 is regulated through assembly with interchangeable N-degron-binding substrate receptors induced by distinct environmental perturbations. Required for the adaptation to osmotic or heat stress. Required for the regulation of protein levels of the adapter protein ART2, a component of the ART-Rsp5 ubiquitin ligase pathway, part of the plasma membrane quality control. Specific for substrates with an N-terminal Pro (Pro/N-degron), including ART2. Has high affinity for the N-terminal sequence Pro-Tyr-Ile-Thr, and also recognizes nonproline residues such as Met-Tyr-Ile-Thr-Val or Val-Cys-Phe-His. This is GID complex substrate-recognition subunit 10 from Saccharomyces cerevisiae (strain ATCC 204508 / S288c) (Baker's yeast).